We begin with the raw amino-acid sequence, 417 residues long: Glucose-1-phosphate adenylyltransferase (417 aa).

Alpha-D-glucose 1-phosphate is bound by residues tyrosine 98, glycine 163, 178-179, and serine 197; that span reads EK.

The protein belongs to the bacterial/plant glucose-1-phosphate adenylyltransferase family. Homotetramer.

It catalyses the reaction alpha-D-glucose 1-phosphate + ATP + H(+) = ADP-alpha-D-glucose + diphosphate. Its pathway is glycan biosynthesis; glycogen biosynthesis. Its function is as follows. Involved in the biosynthesis of ADP-glucose, a building block required for the elongation reactions to produce glycogen. Catalyzes the reaction between ATP and alpha-D-glucose 1-phosphate (G1P) to produce pyrophosphate and ADP-Glc. In Koribacter versatilis (strain Ellin345), this protein is Glucose-1-phosphate adenylyltransferase.